Consider the following 203-residue polypeptide: Ras-like protein family member 10A (203 aa).

Residues M1 to M203 form a small GTPase-like region. Residue G11–T18 coordinates GTP. The Effector region signature appears at H33–Y42. GTP is bound by residues D59–V62 and N129–D132. Cysteine methyl ester is present on C200. The S-farnesyl cysteine moiety is linked to residue C200. The propeptide at S201 to M203 is removed in mature form.

This sequence belongs to the small GTPase superfamily. Ras family. Post-translationally, isoprenylation is essential for nucleolar localization, and the proliferation-inhibiting activity of RASL10A. In terms of tissue distribution, expression appears to be strictly limited to the central nervous system.

Its subcellular location is the cell membrane. The protein localises to the nucleus. It is found in the nucleolus. The enzyme catalyses GTP + H2O = GDP + phosphate + H(+). Its function is as follows. Potent inhibitor of cellular proliferation. In Homo sapiens (Human), this protein is Ras-like protein family member 10A (RASL10A).